We begin with the raw amino-acid sequence, 264 residues long: Hemin import ATP-binding protein HmuV (264 aa).

The region spanning 2-241 (IEVSGVSVRL…ETMLSVFGLR (240 aa)) is the ABC transporter domain. 34–41 (GPNGSGKT) is a binding site for ATP.

Belongs to the ABC transporter superfamily. Heme (hemin) importer (TC 3.A.1.14.5) family. As to quaternary structure, the complex is composed of two ATP-binding proteins (HmuV), two transmembrane proteins (HmuU) and a solute-binding protein (HmuT).

It localises to the cell inner membrane. Functionally, part of the ABC transporter complex HmuTUV involved in hemin import. Responsible for energy coupling to the transport system. This chain is Hemin import ATP-binding protein HmuV, found in Rhizobium leguminosarum.